Consider the following 323-residue polypeptide: tRNA U34 carboxymethyltransferase (323 aa).

Residues Lys-91, Trp-105, Lys-110, Gly-130, 152–154, 181–182, Met-196, Tyr-200, and Arg-315 each bind carboxy-S-adenosyl-L-methionine; these read DPT and IE.

Belongs to the class I-like SAM-binding methyltransferase superfamily. CmoB family. As to quaternary structure, homotetramer.

It catalyses the reaction carboxy-S-adenosyl-L-methionine + 5-hydroxyuridine(34) in tRNA = 5-carboxymethoxyuridine(34) in tRNA + S-adenosyl-L-homocysteine + H(+). In terms of biological role, catalyzes carboxymethyl transfer from carboxy-S-adenosyl-L-methionine (Cx-SAM) to 5-hydroxyuridine (ho5U) to form 5-carboxymethoxyuridine (cmo5U) at position 34 in tRNAs. The sequence is that of tRNA U34 carboxymethyltransferase from Salmonella paratyphi A (strain ATCC 9150 / SARB42).